The following is a 1481-amino-acid chain: Cystic fibrosis transmembrane conductance regulator (1481 aa).

Topologically, residues 1–77 are cytoplasmic; the sequence is MQRSPLEKAS…KLINALRRCF (77 aa). The chain crosses the membrane as a helical span at residues 78–98; the sequence is FWRFMFYGILLYLGEVTKAVQ. The 285-residue stretch at 81–365 folds into the ABC transmembrane type-1 1 domain; sequence FMFYGILLYL…WAVQTWYDSL (285 aa). Residues 99–122 lie on the Extracellular side of the membrane; it reads PLLLGRIIASYDPDNKVERSIAIY. The helical transmembrane segment at 123 to 146 threads the bilayer; it reads LGIGLCLLFIVRMLLLHPAIFGLH. Over 147 to 195 the chain is Cytoplasmic; it reads HIGMQMRIAMFSLIYKKILKLSSRVLDKISIGQLVSLLSNNLNKFDEGL. Residues 196 to 216 traverse the membrane as a helical segment; the sequence is ALAHFVWIAPLQVMLLMGLLW. The Extracellular portion of the chain corresponds to 217 to 222; the sequence is ELLQAS. A helical membrane pass occupies residues 223–243; sequence AFCGLGFLIVLALFQSGLGRM. At 244–298 the chain is on the cytoplasmic side; sequence MMKYRDQRAGKINERLVITSEMIENIQSVKAYCWEEAMEKMIENLRQTELKLTRK. The chain crosses the membrane as a helical span at residues 299 to 319; it reads AAYVRYFNSSAFFFSGFFVVF. At 320 to 339 the chain is on the extracellular side; the sequence is LSVLPYALIKGIILRKIFTT. A helical transmembrane segment spans residues 340–358; that stretch reads ISFCIVLRMAVTRQFPWAV. Topologically, residues 359–858 are cytoplasmic; sequence QTWYDSLGAI…YLRYITVHKS (500 aa). ATP is bound by residues tryptophan 401, 458 to 465, and glutamine 493; that span reads GSTGAGKT. An ABC transporter 1 domain is found at 423–646; the sequence is NGDNSLFFSN…RPDFSSKLMG (224 aa). Cysteine 524 is lipidated: S-palmitoyl cysteine. Serine 549 and serine 660 each carry phosphoserine. The segment at 654-831 is disordered R region; sequence SAERRNSILT…EEINEEDLKE (178 aa). Serine 670 is subject to Phosphoserine; by PKA. Residue serine 686 is modified to Phosphoserine. Lysine 688 is covalently cross-linked (Glycyl lysine isopeptide (Lys-Gly) (interchain with G-Cter in ubiquitin)). Serine 700 and serine 712 each carry phosphoserine. Threonine 717 carries the post-translational modification Phosphothreonine. 5 positions are modified to phosphoserine: serine 737, serine 768, serine 790, serine 795, and serine 813. Residues 859–879 traverse the membrane as a helical segment; that stretch reads LIFVLIWCLVIFLAEVAVSLV. The ABC transmembrane type-1 2 domain occupies 859-1155; it reads LIFVLIWCLV…AVNSSIDVDS (297 aa). Over 880–918 the chain is Extracellular; it reads LLWLLGNAPAYNKGNSTISANSSYAVIITSTSAYYVFYI. N-linked (GlcNAc...) asparagine glycans are attached at residues asparagine 894 and asparagine 900. The discontinuously helical transmembrane segment at 919–939 threads the bilayer; it reads YVGVADTLLALGFFRGLPLVH. Topologically, residues 940–990 are cytoplasmic; that stretch reads TLITVSKILHHKMLHSVLQAPMSTLNALKAGGILNRFSKDIAILDDLLPLT. Residues 991–1011 traverse the membrane as a helical segment; it reads IFDFIQLLLIVIGAVAVVSVL. The Extracellular portion of the chain corresponds to 1012-1013; sequence QP. The helical transmembrane segment at 1014–1034 threads the bilayer; sequence YIFLATVPVIVTFIILRAYFL. Over 1035–1095 the chain is Cytoplasmic; it reads HTSQQLKQLE…TANWFLYLST (61 aa). Residues 1096–1116 form a helical membrane-spanning segment; the sequence is LRWFQMRIEMVFVIFFIVVTF. At 1117-1130 the chain is on the extracellular side; that stretch reads ISILTTGEGEGQVG. The chain crosses the membrane as a helical span at residues 1131–1151; the sequence is IILTLAMNIMGTLQWAVNSSI. Residues 1152-1481 are Cytoplasmic-facing; sequence DVDSLMRSVS…TEEEVQDTRL (330 aa). In terms of domain architecture, ABC transporter 2 spans 1211–1444; sequence MTVKDLTARY…KSLFRQAISP (234 aa). Residues tyrosine 1220 and 1245–1252 contribute to the ATP site; that span reads GRTGSGKS. Positions 1387-1481 are interaction with GORASP2; it reads RTLKQAFADC…TEEEVQDTRL (95 aa). Residue cysteine 1396 is the site of S-palmitoyl cysteine attachment. Serine 1445 and serine 1457 each carry phosphoserine. A disordered region spans residues 1449-1481; that stretch reads KLFPRRNSSKHKSRPPITALKEETEEEVQDTRL. The span at 1450-1462 shows a compositional bias: basic residues; it reads LFPRRNSSKHKSR. Over residues 1471–1481 the composition is skewed to acidic residues; that stretch reads ETEEEVQDTRL. Residues 1479–1481 carry the PDZ-binding motif; it reads TRL.

It belongs to the ABC transporter superfamily. ABCC family. CFTR transporter (TC 3.A.1.202) subfamily. In terms of assembly, monomer; does not require oligomerization for channel activity. May form oligomers in the membrane. Interacts with SLC26A3, SLC26A6 and NHERF1. Interacts with SHANK2. Interacts with MYO6. Interacts (via C-terminus) with GOPC (via PDZ domain); this promotes CFTR internalization and thereby decreases channel activity. Interacts with SLC4A7 through NHERF1. Found in a complex with MYO5B and RAB11A. Interacts with ANO1. Interacts with SLC26A8. Interacts with AHCYL1; the interaction increases CFTR activity. Interacts with CSE1L. The core-glycosylated form interacts with GORASP2 (via PDZ GRASP-type 1 domain) in respone to ER stress. Interacts with MARCHF2; the interaction leads to CFTR ubiqtuitination and degradation. Interacts with ADGRG2. N-glycosylated. Post-translationally, phosphorylated; cAMP treatment promotes phosphorylation and activates the channel. Dephosphorylation decreases the ATPase activity (in vitro). Phosphorylation at PKA sites activates the channel. Phosphorylation at PKC sites enhances the response to phosphorylation by PKA. Phosphorylated by AMPK; this inhibits channel activity. In terms of processing, ubiquitinated, leading to its degradation in the lysosome. Deubiquitination by USP10 in early endosomes enhances its endocytic recycling to the cell membrane. Ubiquitinated by RNF185 during ER stress. Ubiquitinated by MARCHF2.

The protein localises to the apical cell membrane. Its subcellular location is the early endosome membrane. The protein resides in the cell membrane. It is found in the recycling endosome membrane. It localises to the endoplasmic reticulum membrane. The protein localises to the nucleus. It carries out the reaction ATP + H2O + closed Cl(-) channel = ADP + phosphate + open Cl(-) channel.. The catalysed reaction is chloride(in) = chloride(out). It catalyses the reaction hydrogencarbonate(in) = hydrogencarbonate(out). The enzyme catalyses ATP + H2O = ADP + phosphate + H(+). Its function is as follows. Epithelial ion channel that plays an important role in the regulation of epithelial ion and water transport and fluid homeostasis. Mediates the transport of chloride ions across the cell membrane. Possesses an intrinsic ATPase activity and utilizes ATP to gate its channel; the passive flow of anions through the channel is gated by cycles of ATP binding and hydrolysis by the ATP-binding domains. The ion channel is also permeable to HCO(3)(-); selectivity depends on the extracellular chloride concentration. Exerts its function also by modulating the activity of other ion channels and transporters. Contributes to the regulation of the pH and the ion content of the epithelial fluid layer. Modulates the activity of the epithelial sodium channel (ENaC) complex, in part by regulating the cell surface expression of the ENaC complex. May regulate bicarbonate secretion and salvage in epithelial cells by regulating the transporter SLC4A7. Can inhibit the chloride channel activity of ANO1. Plays a role in the chloride and bicarbonate homeostasis during sperm epididymal maturation and capacitation. This is Cystic fibrosis transmembrane conductance regulator from Microcebus murinus (Gray mouse lemur).